The sequence spans 407 residues: MKRAFIMVLDSFGIGATEDADRFGDVGSDTLGHIAEACAKGEADNGRKGPLNLPNLTRLGLVKAHEGSTGKIAAGMDGNADVIGAYAWAHELSSGKDTPSGHWEIAGVPVLFDWGYFSDHENSFPQELLDKLVKRANLPGYLGNCHSSGTVILDQLGEEHMKTGKPIFYTSADSVFQIACHEETFGLDKLYELCEIAREELTVGGYNIGRVIARPFIGDKAGNFQRTGNRHDLAVEPPAPTVLQKLVDEKQGHVVSVGKIADIYANCGITKKVKATGLDALFDATLKEMKEAGDKTIVFTNFVDFDSSWGHRRDIAGYAAGLELFDRRLPELMELVGEDDILILTADHGCDPSWTGTDHTREHIPVLIYGPKVKPGSLGHRETFADIGQTLATYFGTSPMDYGKNML.

Mn(2+)-binding residues include Asp-10, Asp-306, His-311, Asp-347, His-348, and His-359.

This sequence belongs to the phosphopentomutase family. Requires Mn(2+) as cofactor.

The protein localises to the cytoplasm. The catalysed reaction is 2-deoxy-alpha-D-ribose 1-phosphate = 2-deoxy-D-ribose 5-phosphate. It carries out the reaction alpha-D-ribose 1-phosphate = D-ribose 5-phosphate. It participates in carbohydrate degradation; 2-deoxy-D-ribose 1-phosphate degradation; D-glyceraldehyde 3-phosphate and acetaldehyde from 2-deoxy-alpha-D-ribose 1-phosphate: step 1/2. Isomerase that catalyzes the conversion of deoxy-ribose 1-phosphate (dRib-1-P) and ribose 1-phosphate (Rib-1-P) to deoxy-ribose 5-phosphate (dRib-5-P) and ribose 5-phosphate (Rib-5-P), respectively. This Salmonella dublin (strain CT_02021853) protein is Phosphopentomutase.